The primary structure comprises 532 residues: Glucose-6-phosphate isomerase (532 aa).

The active-site Proton donor is Glu-322. Catalysis depends on residues His-351 and Lys-457.

This sequence belongs to the GPI family.

It localises to the cytoplasm. It catalyses the reaction alpha-D-glucose 6-phosphate = beta-D-fructose 6-phosphate. The protein operates within carbohydrate biosynthesis; gluconeogenesis. It functions in the pathway carbohydrate degradation; glycolysis; D-glyceraldehyde 3-phosphate and glycerone phosphate from D-glucose: step 2/4. Its function is as follows. Catalyzes the reversible isomerization of glucose-6-phosphate to fructose-6-phosphate. The polypeptide is Glucose-6-phosphate isomerase (Synechococcus sp. (strain JA-2-3B'a(2-13)) (Cyanobacteria bacterium Yellowstone B-Prime)).